Consider the following 563-residue polypeptide: Putative cysteine ligase BshC (563 aa).

Residues 493 to 518 (KEKTYRAGRRKHDELLQQLDKAELNL) are a coiled coil.

It belongs to the BshC family.

This chain is Putative cysteine ligase BshC, found in Chlorobaculum tepidum (strain ATCC 49652 / DSM 12025 / NBRC 103806 / TLS) (Chlorobium tepidum).